A 482-amino-acid chain; its full sequence is Serine carboxypeptidase-like 26 (482 aa).

The signal sequence occupies residues 1–28 (MAVAAAAAARRRDVSCLLLLLCFSSSMA). 3 disulfides stabilise this stretch: Cys101-Cys366, Cys263-Cys274, and Cys298-Cys333. N-linked (GlcNAc...) asparagine glycosylation is present at Asn152. Ser194 is a catalytic residue. 4 N-linked (GlcNAc...) asparagine glycosylation sites follow: Asn269, Asn301, Asn354, and Asn375. Catalysis depends on residues Asp403 and His455.

Belongs to the peptidase S10 family.

It localises to the secreted. Functionally, acts as a positive regulator of grain size by controlling grain width, filling and weight. High expression of GS5 in the grain is correlated with large grain size. This Oryza sativa subsp. japonica (Rice) protein is Serine carboxypeptidase-like 26.